The chain runs to 255 residues: Triosephosphate isomerase (255 aa).

Residue 15-17 coordinates substrate; that stretch reads NWK. The active-site Electrophile is the His100. The Proton acceptor role is filled by Glu172. Residues Gly178, Ser218, and 239-240 each bind substrate; that span reads GG.

Belongs to the triosephosphate isomerase family. As to quaternary structure, homodimer.

The protein localises to the cytoplasm. The catalysed reaction is D-glyceraldehyde 3-phosphate = dihydroxyacetone phosphate. The protein operates within carbohydrate biosynthesis; gluconeogenesis. Its pathway is carbohydrate degradation; glycolysis; D-glyceraldehyde 3-phosphate from glycerone phosphate: step 1/1. Involved in the gluconeogenesis. Catalyzes stereospecifically the conversion of dihydroxyacetone phosphate (DHAP) to D-glyceraldehyde-3-phosphate (G3P). The chain is Triosephosphate isomerase from Clostridium tetani (strain Massachusetts / E88).